We begin with the raw amino-acid sequence, 818 residues long: uncharacterized protein (818 aa).

Low complexity-rich tracts occupy residues 1 to 33 (MYNN…NYIS), 44 to 68 (NNFL…PQQQ), and 97 to 150 (NNSN…TKSN). Disordered regions lie at residues 1–68 (MYNN…PQQQ), 92–150 (LNTG…TKSN), 164–220 (KLDN…KYHE), 284–306 (NMNG…NNSD), and 415–445 (NINK…NNNN). Acidic residues-rich tracts occupy residues 172-190 (SEEE…EEKE) and 205-214 (DNNSQDEDKE). Residues 284–302 (NMNGSSDSSDSSNSSGHSR) show a composition bias toward low complexity. Residues 534 to 554 (IIAIIVIVWPLIANLTYKFIV) traverse the membrane as a helical segment. The disordered stretch occupies residues 779–808 (ANNFMSDSNRSPSSSSSSSSSTSDSENGML). The span at 784-803 (SDSNRSPSSSSSSSSSTSDS) shows a compositional bias: low complexity.

It localises to the membrane. This is an uncharacterized protein from Dictyostelium discoideum (Social amoeba).